The following is a 106-amino-acid chain: Small ribosomal subunit protein bS18 (106 aa).

Residues 1 to 32 (MRWMKIMSEDMKQEQSGEGRGGRGGPARPLAS) form a disordered region. The segment covering 7–21 (MSEDMKQEQSGEGRG) has biased composition (basic and acidic residues).

This sequence belongs to the bacterial ribosomal protein bS18 family. Part of the 30S ribosomal subunit. Forms a tight heterodimer with protein bS6.

Its function is as follows. Binds as a heterodimer with protein bS6 to the central domain of the 16S rRNA, where it helps stabilize the platform of the 30S subunit. The sequence is that of Small ribosomal subunit protein bS18 from Magnetococcus marinus (strain ATCC BAA-1437 / JCM 17883 / MC-1).